The primary structure comprises 74 residues: Sec-independent protein translocase protein TatA (74 aa).

A helical transmembrane segment spans residues 1-21 (MGGISIWNLVIIVLLVVLLFG). Residues 51 to 74 (AEFEKVEQKTAESTEQKAKEKEQA) form a disordered region.

Belongs to the TatA/E family. The Tat system comprises two distinct complexes: a TatABC complex, containing multiple copies of TatA, TatB and TatC subunits, and a separate TatA complex, containing only TatA subunits. Substrates initially bind to the TatABC complex, which probably triggers association of the separate TatA complex to form the active translocon.

The protein localises to the cell inner membrane. Functionally, part of the twin-arginine translocation (Tat) system that transports large folded proteins containing a characteristic twin-arginine motif in their signal peptide across membranes. TatA could form the protein-conducting channel of the Tat system. The protein is Sec-independent protein translocase protein TatA of Glaesserella parasuis serovar 5 (strain SH0165) (Haemophilus parasuis).